A 382-amino-acid polypeptide reads, in one-letter code: MNLKEKTRALFAEIFGYPATHTIQAPGRVNLIGEHTDYNDGFVLPCAIDYQTVISCAPRDDRTVRVIAADYDNQVDEFSLDAPIVTHDSQQWSNYVRGVVKHLQQRNNAFGGVDMVISGNVPQGAGLSSSASLEVAVGTVFQQLYHLPLDGAQIALNGQEAENQFVGCNCGIMDQLISALGKKDHALLIDCRTLGAKAVSMPKGVAVVIINSNFKRTLVGSEYNTRREQCETGARFFQQPALRDVSLEAFNAVASELDPVVAKRVRHVLSENARTVEAASALEKGDLQRMGQLMAESHASMRDDFEITVPQIDTLVDIVKATIGDQGGVRMTGGGFGGCVVALIPEDLVPAVRQAVAQQYEAKTGIKETFYVCKPSQGAGQC.

34 to 37 serves as a coordination point for substrate; sequence EHTD. Position 124-130 (124-130) interacts with ATP; it reads GAGLSSS. Residues serine 130 and glutamate 162 each contribute to the Mg(2+) site. Aspartate 174 serves as the catalytic Proton acceptor. Tyrosine 223 contacts substrate.

This sequence belongs to the GHMP kinase family. GalK subfamily.

It is found in the cytoplasm. It catalyses the reaction alpha-D-galactose + ATP = alpha-D-galactose 1-phosphate + ADP + H(+). The protein operates within carbohydrate metabolism; galactose metabolism. In terms of biological role, catalyzes the transfer of the gamma-phosphate of ATP to D-galactose to form alpha-D-galactose-1-phosphate (Gal-1-P). This chain is Galactokinase, found in Salmonella heidelberg (strain SL476).